A 129-amino-acid polypeptide reads, in one-letter code: Small ribosomal subunit protein uS9 (129 aa).

This sequence belongs to the universal ribosomal protein uS9 family.

In Aliarcobacter butzleri (strain RM4018) (Arcobacter butzleri), this protein is Small ribosomal subunit protein uS9.